Here is a 202-residue protein sequence, read N- to C-terminus: Endothelin-1 (202 aa).

The first 25 residues, 1 to 25 (MDYFPVIFSLLFVTFQGAPETAVLG), serve as a signal peptide directing secretion. Residues 26–50 (AELSTGAENGVQSPPPSTPWRPRRS) constitute a propeptide that is removed on maturation. Cystine bridges form between Cys53/Cys67 and Cys55/Cys63. Residues 74 to 202 (VNTPERVVPY…DQKLTHNRAH (129 aa)) constitute a propeptide that is removed on maturation. Residues 110 to 124 (CQCAHQKDKKCWNFC) form an endothelin-like region.

Belongs to the endothelin/sarafotoxin family. Highest expression in the adult is in lung. Lower levels found in heart, kidney, brain and intestine. In the embryo, expressed in outer and inner pharyngeal arch surfaces. Also expressed in endothelium of dorsal aorta and arch arteries, and in epithelium of pharyngeal pouches.

It is found in the secreted. Endothelins are endothelium-derived vasoconstrictor peptides. Probable ligand for G-protein coupled receptors EDNRA and EDNRB which activates PTK2B, BCAR1, BCAR3 and, GTPases RAP1 and RHOA cascade in glomerular mesangial cells. Also binds the DEAR/FBXW7-AS1 receptor. Promotes mesenteric arterial wall remodeling via activation of ROCK signaling and subsequent colocalization of NFATC3 with F-actin filaments. NFATC3 then translocates to the nucleus where it subsequently promotes the transcription of the smooth muscle hypertrophy and differentiation marker ACTA2. The sequence is that of Endothelin-1 (Edn1) from Mus musculus (Mouse).